A 302-amino-acid polypeptide reads, in one-letter code: tRNA dimethylallyltransferase (302 aa).

10–17 (GPTAIGKT) contributes to the ATP binding site. Residue 12–17 (TAIGKT) participates in substrate binding. An interaction with substrate tRNA region spans residues 35 to 38 (DSRQ).

It belongs to the IPP transferase family. Monomer. Mg(2+) is required as a cofactor.

The enzyme catalyses adenosine(37) in tRNA + dimethylallyl diphosphate = N(6)-dimethylallyladenosine(37) in tRNA + diphosphate. Functionally, catalyzes the transfer of a dimethylallyl group onto the adenine at position 37 in tRNAs that read codons beginning with uridine, leading to the formation of N6-(dimethylallyl)adenosine (i(6)A). The polypeptide is tRNA dimethylallyltransferase (Christiangramia forsetii (strain DSM 17595 / CGMCC 1.15422 / KT0803) (Gramella forsetii)).